We begin with the raw amino-acid sequence, 142 residues long: Large ribosomal subunit protein uL13 (142 aa).

The protein belongs to the universal ribosomal protein uL13 family. In terms of assembly, part of the 50S ribosomal subunit.

This protein is one of the early assembly proteins of the 50S ribosomal subunit, although it is not seen to bind rRNA by itself. It is important during the early stages of 50S assembly. In Shewanella baltica (strain OS223), this protein is Large ribosomal subunit protein uL13.